The primary structure comprises 71 residues: MFTLKKSMLLLFFLGTINLSLCEEERDADEEERRDNPDESEVEVEKRFLPLLAGLAANFLPKIFCKITRKC.

Residues 1–22 (MFTLKKSMLLLFFLGTINLSLC) form the signal peptide. The propeptide occupies 23-45 (EEERDADEEERRDNPDESEVEVE). C65 and C71 form a disulfide bridge.

Belongs to the frog skin active peptide (FSAP) family. Brevinin subfamily. As to expression, expressed by the skin glands.

The protein localises to the secreted. Its function is as follows. Shows antibacterial activity against representative Gram-negative and Gram-positive bacterial species, and a very high hemolytic activity. In Pelophylax lessonae (Pool frog), this protein is Brevinin-1E.